The primary structure comprises 227 residues: Lipoprotein-releasing system ATP-binding protein LolD (227 aa).

The ABC transporter domain maps to 7–227 (LRLERIGRAY…TLKDGRVVDL (221 aa)). Residue 43–50 (APSGAGKS) participates in ATP binding.

Belongs to the ABC transporter superfamily. Lipoprotein translocase (TC 3.A.1.125) family. The complex is composed of two ATP-binding proteins (LolD) and two transmembrane proteins (LolC and LolE).

The protein localises to the cell inner membrane. Its function is as follows. Part of the ABC transporter complex LolCDE involved in the translocation of mature outer membrane-directed lipoproteins, from the inner membrane to the periplasmic chaperone, LolA. Responsible for the formation of the LolA-lipoprotein complex in an ATP-dependent manner. The sequence is that of Lipoprotein-releasing system ATP-binding protein LolD from Brucella abortus biovar 1 (strain 9-941).